The chain runs to 740 residues: NAD(P)H-quinone oxidoreductase subunit 5, chloroplastic (740 aa).

Transmembrane regions (helical) follow at residues Trp9 to Phe29, Trp40 to Ile60, Ile89 to Ile109, Phe125 to Ile145, Ile147 to Thr167, Gly185 to Phe205, Asn219 to Ser239, Thr258 to Ala278, Val286 to Ala306, Leu327 to Ile347, Ala354 to Ser374, Ile396 to Ser416, Trp425 to Tyr445, Leu543 to Phe563, Val602 to Val622, and Ser717 to Phe737.

It belongs to the complex I subunit 5 family. As to quaternary structure, NDH is composed of at least 16 different subunits, 5 of which are encoded in the nucleus.

It is found in the plastid. It localises to the chloroplast thylakoid membrane. The catalysed reaction is a plastoquinone + NADH + (n+1) H(+)(in) = a plastoquinol + NAD(+) + n H(+)(out). It catalyses the reaction a plastoquinone + NADPH + (n+1) H(+)(in) = a plastoquinol + NADP(+) + n H(+)(out). Functionally, NDH shuttles electrons from NAD(P)H:plastoquinone, via FMN and iron-sulfur (Fe-S) centers, to quinones in the photosynthetic chain and possibly in a chloroplast respiratory chain. The immediate electron acceptor for the enzyme in this species is believed to be plastoquinone. Couples the redox reaction to proton translocation, and thus conserves the redox energy in a proton gradient. The polypeptide is NAD(P)H-quinone oxidoreductase subunit 5, chloroplastic (ndhF) (Solanum bulbocastanum (Wild potato)).